Consider the following 451-residue polypeptide: UDP-glycosyltransferase 13 (451 aa).

The Proton acceptor role is filled by histidine 15. Histidine 15 is a binding site for an anthocyanidin. Residue aspartate 93 is the Charge relay of the active site. UDP-alpha-D-glucose contacts are provided by alanine 326, glutamine 328, histidine 343, tryptophan 346, asparagine 347, serine 348, and glutamate 351. Residue alanine 366 participates in an anthocyanidin binding. The UDP-alpha-D-glucose site is built by glutamate 367 and glutamine 368.

Belongs to the UDP-glycosyltransferase family. In terms of tissue distribution, expressed in roots. Detected in stems and leaves.

The catalysed reaction is a 7-hydroxyisoflavone + UDP-alpha-D-glucose = a 7-hydroxyisoflavone 7-O-beta-D-glucoside + UDP + H(+). Functionally, isoflavone 7-O-glucosyltransferase converting daidzein to daidzin, genistein to genistin and formononetin to ononin. Shows some activity toward the flavanones liquiritigenin and naringenin, but not toward cyanidin, isoliquiritigenin, apigenin, luteolin, kaempferol, quercetin, daidzin and puerarin. This is UDP-glycosyltransferase 13 from Pueraria montana var. lobata (Kudzu vine).